The following is a 369-amino-acid chain: Short chain dehydrogenase rstn4 (369 aa).

NADP(+) is bound by residues K88, D111, N138, Y234, and K238. Residue Y234 is the Proton donor of the active site. The Lowers pKa of active site Tyr role is filled by K238.

The protein belongs to the short-chain dehydrogenases/reductases (SDR) family.

It participates in antifungal biosynthesis. Functionally, short chain dehydrogenase; part of the gene cluster that mediates the biosynthesis of the tetrahydropyranyl antifungal agent restricticin that acts as an inhibitor of CYP51 and blocks the ergosterol biosynthesis. The highly reducing polyketide synthase rstn3, the short chain dehydrogenase rstn4, the cyclase rstn5, the FAD-dependent monooxygenase rstn6 and the enoylreductase rstn7 are required to generate the first stable intermediate desmethylrestrictinol. Rstn3 with rstn7 biosynthesize the first polyketide chain intermediate that is reduced by rstn4, followed by epoxidation by rstn6 before 6-endo cyclization via epoxide opening by rstn5 leads to desmethylrestrictinol. The methyltransferase rstn1 then catalyzes the C4 O-methylation of desmethylrestrictinol to produce restrictinol, and the nonribosomal peptide synthetase rstn8 catalyzes the C3 esterification of restrictinol with glycine that leads to restricticin. The protein is Short chain dehydrogenase rstn4 of Aspergillus nomiae NRRL (strain ATCC 15546 / NRRL 13137 / CBS 260.88 / M93).